Consider the following 94-residue polypeptide: DNA-directed RNA polymerase subunit omega (94 aa).

It belongs to the RNA polymerase subunit omega family. As to quaternary structure, the RNAP catalytic core consists of 2 alpha, 1 beta, 1 beta' and 1 omega subunit. When a sigma factor is associated with the core the holoenzyme is formed, which can initiate transcription.

It carries out the reaction RNA(n) + a ribonucleoside 5'-triphosphate = RNA(n+1) + diphosphate. Its function is as follows. Promotes RNA polymerase assembly. Latches the N- and C-terminal regions of the beta' subunit thereby facilitating its interaction with the beta and alpha subunits. In Bifidobacterium animalis subsp. lactis (strain AD011), this protein is DNA-directed RNA polymerase subunit omega.